The chain runs to 138 residues: Beta-lactamase HcpB (138 aa).

3 TPR repeats span residues 1–28, 57–94, and 97–130; these read MVGG…NEMF, GNGC…NDQD, and LILG…GSED. 4 cysteine pairs are disulfide-bonded: Cys-22-Cys-30, Cys-52-Cys-60, Cys-88-Cys-96, and Cys-124-Cys-132.

The protein belongs to the hcp beta-lactamase family.

The catalysed reaction is a beta-lactam + H2O = a substituted beta-amino acid. Functionally, hydrolyzes 6-aminopenicillinic acid and 7-aminocephalosporanic acid (ACA) derivatives. This is Beta-lactamase HcpB (hcpB) from Helicobacter pylori (strain ATCC 700392 / 26695) (Campylobacter pylori).